Here is a 188-residue protein sequence, read N- to C-terminus: Adenine phosphoribosyltransferase (188 aa).

The protein belongs to the purine/pyrimidine phosphoribosyltransferase family. Homodimer.

The protein resides in the cytoplasm. The enzyme catalyses AMP + diphosphate = 5-phospho-alpha-D-ribose 1-diphosphate + adenine. The protein operates within purine metabolism; AMP biosynthesis via salvage pathway; AMP from adenine: step 1/1. Functionally, catalyzes a salvage reaction resulting in the formation of AMP, that is energically less costly than de novo synthesis. This Neisseria meningitidis serogroup A / serotype 4A (strain DSM 15465 / Z2491) protein is Adenine phosphoribosyltransferase.